A 227-amino-acid chain; its full sequence is UPF0173 metal-dependent hydrolase STK_14180 (227 aa).

It belongs to the UPF0173 family.

The sequence is that of UPF0173 metal-dependent hydrolase STK_14180 from Sulfurisphaera tokodaii (strain DSM 16993 / JCM 10545 / NBRC 100140 / 7) (Sulfolobus tokodaii).